Reading from the N-terminus, the 161-residue chain is Ribonuclease H (161 aa).

The RNase H type-1 domain occupies Gly3–Glu144. Asp12, Glu50, Asp72, and Asp136 together coordinate Mg(2+). The disordered stretch occupies residues Glu133 to Ala161. Residues Glu150–Ala161 show a composition bias toward polar residues.

The protein belongs to the RNase H family. In terms of assembly, monomer. Mg(2+) is required as a cofactor.

The protein resides in the cytoplasm. The catalysed reaction is Endonucleolytic cleavage to 5'-phosphomonoester.. Its function is as follows. Endonuclease that specifically degrades the RNA of RNA-DNA hybrids. This chain is Ribonuclease H, found in Shewanella halifaxensis (strain HAW-EB4).